The chain runs to 459 residues: Methionine aminopeptidase 2-1 (459 aa).

Residues 1–12 (MGSKSPEDHRQG) are compositionally biased toward basic and acidic residues. Positions 1 to 79 (MGSKSPEDHR…RKRNKKKSKK (79 aa)) are disordered. The span at 43–54 (GQDEDGDDDDDE) shows a compositional bias: acidic residues. The span at 67–79 (KKKRKRNKKKSKK) shows a compositional bias: basic residues. Histidine 210 is a binding site for substrate. Residues aspartate 231, aspartate 242, and histidine 311 each coordinate a divalent metal cation. Histidine 319 is a substrate binding site. Residues glutamate 344 and glutamate 440 each contribute to the a divalent metal cation site.

The protein belongs to the peptidase M24A family. Methionine aminopeptidase eukaryotic type 2 subfamily. The cofactor is Co(2+). Requires Zn(2+) as cofactor. It depends on Mn(2+) as a cofactor. Fe(2+) is required as a cofactor.

It localises to the cytoplasm. It catalyses the reaction Release of N-terminal amino acids, preferentially methionine, from peptides and arylamides.. Functionally, cotranslationally removes the N-terminal methionine from nascent proteins. The N-terminal methionine is often cleaved when the second residue in the primary sequence is small and uncharged (Met-Ala-, Cys, Gly, Pro, Ser, Thr, or Val). The polypeptide is Methionine aminopeptidase 2-1 (Pyrenophora tritici-repentis (strain Pt-1C-BFP) (Wheat tan spot fungus)).